Consider the following 106-residue polypeptide: Small ribosomal subunit protein uS10 (106 aa).

This sequence belongs to the universal ribosomal protein uS10 family. Part of the 30S ribosomal subunit.

Involved in the binding of tRNA to the ribosomes. In Synechococcus sp. (strain WH7803), this protein is Small ribosomal subunit protein uS10.